Reading from the N-terminus, the 194-residue chain is Protein GrpE (194 aa).

It belongs to the GrpE family. Homodimer.

It localises to the cytoplasm. Its function is as follows. Participates actively in the response to hyperosmotic and heat shock by preventing the aggregation of stress-denatured proteins, in association with DnaK and GrpE. It is the nucleotide exchange factor for DnaK and may function as a thermosensor. Unfolded proteins bind initially to DnaJ; upon interaction with the DnaJ-bound protein, DnaK hydrolyzes its bound ATP, resulting in the formation of a stable complex. GrpE releases ADP from DnaK; ATP binding to DnaK triggers the release of the substrate protein, thus completing the reaction cycle. Several rounds of ATP-dependent interactions between DnaJ, DnaK and GrpE are required for fully efficient folding. The chain is Protein GrpE from Aliivibrio fischeri (strain MJ11) (Vibrio fischeri).